A 436-amino-acid chain; its full sequence is GTPase Der (436 aa).

2 consecutive EngA-type G domains span residues 4 to 167 (PTVA…PVEE) and 175 to 351 (IRFS…ESQN). Residues 10–17 (GRPNVGKS), 57–61 (DTGGI), 119–122 (NKVD), 181–188 (GRPNVGKS), 229–233 (DTAGM), and 294–297 (NKWD) contribute to the GTP site. The KH-like domain maps to 352–436 (KRIPSAVLND…PIHLIARKRK (85 aa)).

It belongs to the TRAFAC class TrmE-Era-EngA-EngB-Septin-like GTPase superfamily. EngA (Der) GTPase family. As to quaternary structure, associates with the 50S ribosomal subunit.

Its function is as follows. GTPase that plays an essential role in the late steps of ribosome biogenesis. The sequence is that of GTPase Der from Streptococcus pyogenes serotype M3 (strain ATCC BAA-595 / MGAS315).